The primary structure comprises 233 residues: Orotidine 5'-phosphate decarboxylase (233 aa).

Substrate is bound by residues Asp11, Lys34, 61 to 70 (DLKLHDIPNT), Thr117, Arg179, Gln189, Gly209, and Arg210. The Proton donor role is filled by Lys63.

It belongs to the OMP decarboxylase family. Type 1 subfamily. As to quaternary structure, homodimer.

It catalyses the reaction orotidine 5'-phosphate + H(+) = UMP + CO2. The protein operates within pyrimidine metabolism; UMP biosynthesis via de novo pathway; UMP from orotate: step 2/2. Functionally, catalyzes the decarboxylation of orotidine 5'-monophosphate (OMP) to uridine 5'-monophosphate (UMP). This is Orotidine 5'-phosphate decarboxylase from Streptococcus agalactiae serotype V (strain ATCC BAA-611 / 2603 V/R).